Here is a 100-residue protein sequence, read N- to C-terminus: NADH-quinone oxidoreductase subunit K (100 aa).

Transmembrane regions (helical) follow at residues 4–24 (MQHG…GLLI), 28–48 (LIFM…AWVV), and 60–80 (IFYL…LALL).

This sequence belongs to the complex I subunit 4L family. In terms of assembly, NDH-1 is composed of 13 different subunits. Subunits NuoA, H, J, K, L, M, N constitute the membrane sector of the complex.

The protein resides in the cell membrane. The enzyme catalyses a quinone + NADH + 5 H(+)(in) = a quinol + NAD(+) + 4 H(+)(out). NDH-1 shuttles electrons from NADH, via FMN and iron-sulfur (Fe-S) centers, to quinones in the respiratory chain. The immediate electron acceptor for the enzyme in this species is believed to be ubiquinone. Couples the redox reaction to proton translocation (for every two electrons transferred, four hydrogen ions are translocated across the cytoplasmic membrane), and thus conserves the redox energy in a proton gradient. The protein is NADH-quinone oxidoreductase subunit K of Hamiltonella defensa subsp. Acyrthosiphon pisum (strain 5AT).